We begin with the raw amino-acid sequence, 571 residues long: Proline--tRNA ligase (571 aa).

It belongs to the class-II aminoacyl-tRNA synthetase family. ProS type 1 subfamily. In terms of assembly, homodimer.

The protein localises to the cytoplasm. It carries out the reaction tRNA(Pro) + L-proline + ATP = L-prolyl-tRNA(Pro) + AMP + diphosphate. Functionally, catalyzes the attachment of proline to tRNA(Pro) in a two-step reaction: proline is first activated by ATP to form Pro-AMP and then transferred to the acceptor end of tRNA(Pro). As ProRS can inadvertently accommodate and process non-cognate amino acids such as alanine and cysteine, to avoid such errors it has two additional distinct editing activities against alanine. One activity is designated as 'pretransfer' editing and involves the tRNA(Pro)-independent hydrolysis of activated Ala-AMP. The other activity is designated 'posttransfer' editing and involves deacylation of mischarged Ala-tRNA(Pro). The misacylated Cys-tRNA(Pro) is not edited by ProRS. This is Proline--tRNA ligase from Shewanella frigidimarina (strain NCIMB 400).